The primary structure comprises 497 residues: IWS1-like protein (497 aa).

Residues 1 to 191 (MSDHEGASPA…SDRRGGRNFE (191 aa)) are disordered. Composition is skewed to low complexity over residues 7–23 (ASPASSAPSSPLVPVSP) and 47–57 (PLAPRSPASPR). 3 stretches are compositionally biased toward basic and acidic residues: residues 123–134 (EGDKQQKRKDLF), 144–160 (DRPKKQNDDLDELVKGD), and 181–191 (PSDRRGGRNFE). Residues 281–361 (SALSEWLAPL…GEWARPIYHL (81 aa)) form the TFIIS N-terminal domain. The segment at 369-433 (SRQEREERDY…GDKGYINRAR (65 aa)) is disordered. 2 stretches are compositionally biased toward basic and acidic residues: residues 370–382 (RQEREERDYSRMP) and 401–411 (APKRPRIRDAE).

Belongs to the IWS1 family.

Its subcellular location is the nucleus. This is IWS1-like protein from Caenorhabditis briggsae.